Consider the following 240-residue polypeptide: UDP-2,3-diacylglucosamine hydrolase (240 aa).

Residues aspartate 8, histidine 10, aspartate 41, asparagine 79, and histidine 114 each contribute to the Mn(2+) site. Substrate is bound at residue 79 to 80 (NR). Positions 122, 160, 164, 167, and 195 each coordinate substrate. Positions 195 and 197 each coordinate Mn(2+).

The protein belongs to the LpxH family. Requires Mn(2+) as cofactor.

It is found in the cell inner membrane. It catalyses the reaction UDP-2-N,3-O-bis[(3R)-3-hydroxytetradecanoyl]-alpha-D-glucosamine + H2O = 2-N,3-O-bis[(3R)-3-hydroxytetradecanoyl]-alpha-D-glucosaminyl 1-phosphate + UMP + 2 H(+). Its pathway is glycolipid biosynthesis; lipid IV(A) biosynthesis; lipid IV(A) from (3R)-3-hydroxytetradecanoyl-[acyl-carrier-protein] and UDP-N-acetyl-alpha-D-glucosamine: step 4/6. In terms of biological role, hydrolyzes the pyrophosphate bond of UDP-2,3-diacylglucosamine to yield 2,3-diacylglucosamine 1-phosphate (lipid X) and UMP by catalyzing the attack of water at the alpha-P atom. Involved in the biosynthesis of lipid A, a phosphorylated glycolipid that anchors the lipopolysaccharide to the outer membrane of the cell. The polypeptide is UDP-2,3-diacylglucosamine hydrolase (Shigella dysenteriae serotype 1 (strain Sd197)).